The following is a 1186-amino-acid chain: ATP-dependent helicase/deoxyribonuclease subunit B (1186 aa).

Belongs to the helicase family. AddB/RexB type 2 subfamily. As to quaternary structure, heterodimer of AddA and RexB. The cofactor is Mg(2+).

Functionally, the heterodimer acts as both an ATP-dependent DNA helicase and an ATP-dependent, dual-direction single-stranded exonuclease. Recognizes the chi site generating a DNA molecule suitable for the initiation of homologous recombination. This subunit has 5' -&gt; 3' nuclease activity but not helicase activity. The polypeptide is ATP-dependent helicase/deoxyribonuclease subunit B (Latilactobacillus sakei subsp. sakei (strain 23K) (Lactobacillus sakei subsp. sakei)).